The sequence spans 227 residues: UPF0173 metal-dependent hydrolase BCE33L4354 (227 aa).

Belongs to the UPF0173 family.

The chain is UPF0173 metal-dependent hydrolase BCE33L4354 from Bacillus cereus (strain ZK / E33L).